The following is a 278-amino-acid chain: MANYTAADVKKLRELTGAGMMDCKKALDEAEGNVEKAVEALRIKGQKGVAKREGRSAENGAVVSVIADDNASGVLVELKCETDFVAKGEKFQAAANAIAEHVAKTAPADLEALLASEIEPGKTVQAFVDEANANLGEKIVLDRFAAYADGYVSAYMHRTMPDLPPQIGVLVELDKPNAEIAKGVAQHIAAFAPKYLSKEDVPAEVVESERRVAEETTRAEGKPEAALPKIVEGRLNGFFKDATLLGQPYALDNKKSVQKVLDEAGVTLKRFTRIKVGI.

An involved in Mg(2+) ion dislocation from EF-Tu region spans residues 82–85 (TDFV).

It belongs to the EF-Ts family.

The protein localises to the cytoplasm. In terms of biological role, associates with the EF-Tu.GDP complex and induces the exchange of GDP to GTP. It remains bound to the aminoacyl-tRNA.EF-Tu.GTP complex up to the GTP hydrolysis stage on the ribosome. This Streptomyces avermitilis (strain ATCC 31267 / DSM 46492 / JCM 5070 / NBRC 14893 / NCIMB 12804 / NRRL 8165 / MA-4680) protein is Elongation factor Ts.